Consider the following 339-residue polypeptide: Lipoate-protein ligase A (339 aa).

Residues 29–217 form the BPL/LPL catalytic domain; that stretch reads PKKQSILFLW…AFFQHYGMKV (189 aa). ATP is bound by residues Arg71, 76-79, and Lys135; that span reads GAVF. Lys135 is a binding site for (R)-lipoate.

This sequence belongs to the LplA family. As to quaternary structure, monomer.

Its subcellular location is the cytoplasm. The catalysed reaction is L-lysyl-[lipoyl-carrier protein] + (R)-lipoate + ATP = N(6)-[(R)-lipoyl]-L-lysyl-[lipoyl-carrier protein] + AMP + diphosphate + H(+). It functions in the pathway protein modification; protein lipoylation via exogenous pathway; protein N(6)-(lipoyl)lysine from lipoate: step 1/2. The protein operates within protein modification; protein lipoylation via exogenous pathway; protein N(6)-(lipoyl)lysine from lipoate: step 2/2. Catalyzes both the ATP-dependent activation of exogenously supplied lipoate to lipoyl-AMP and the transfer of the activated lipoyl onto the lipoyl domains of lipoate-dependent enzymes. In Blochmanniella pennsylvanica (strain BPEN), this protein is Lipoate-protein ligase A.